The following is a 56-amino-acid chain: Small ribosomal subunit protein uS14 (56 aa).

C21, C24, C39, and C42 together coordinate Zn(2+).

The protein belongs to the universal ribosomal protein uS14 family. Zn(2+) is required as a cofactor.

The sequence is that of Small ribosomal subunit protein uS14 (rps29A) from Guillardia theta (Cryptophyte).